Consider the following 383-residue polypeptide: S-adenosylmethionine synthase (383 aa).

H15 provides a ligand contact to ATP. D17 is a binding site for Mg(2+). A K(+)-binding site is contributed by E43. 2 residues coordinate L-methionine: E56 and Q99. Residues 99 to 109 (QSPDINQGVDR) form a flexible loop region. Residues 164–166 (DAK), 230–231 (RF), D239, 245–246 (RK), A262, and K266 contribute to the ATP site. Residue D239 participates in L-methionine binding. Position 270 (K270) interacts with L-methionine.

The protein belongs to the AdoMet synthase family. As to quaternary structure, homotetramer; dimer of dimers. The cofactor is Mg(2+). It depends on K(+) as a cofactor.

The protein localises to the cytoplasm. It catalyses the reaction L-methionine + ATP + H2O = S-adenosyl-L-methionine + phosphate + diphosphate. Its pathway is amino-acid biosynthesis; S-adenosyl-L-methionine biosynthesis; S-adenosyl-L-methionine from L-methionine: step 1/1. Its function is as follows. Catalyzes the formation of S-adenosylmethionine (AdoMet) from methionine and ATP. The overall synthetic reaction is composed of two sequential steps, AdoMet formation and the subsequent tripolyphosphate hydrolysis which occurs prior to release of AdoMet from the enzyme. The protein is S-adenosylmethionine synthase of Shewanella sp. (strain ANA-3).